The sequence spans 163 residues: Lipoprotein signal peptidase (163 aa).

A run of 3 helical transmembrane segments spans residues 11–31, 63–83, and 88–108; these read ILIA…IATT, KMTF…YFFI, and YNLF…GNFI. Active-site residues include Asp-118 and Asp-136. The helical transmembrane segment at 131 to 151 threads the bilayer; that stretch reads IFNIADSSLTIGVILIIIALL.

It belongs to the peptidase A8 family.

It is found in the cell membrane. The catalysed reaction is Release of signal peptides from bacterial membrane prolipoproteins. Hydrolyzes -Xaa-Yaa-Zaa-|-(S,diacylglyceryl)Cys-, in which Xaa is hydrophobic (preferably Leu), and Yaa (Ala or Ser) and Zaa (Gly or Ala) have small, neutral side chains.. It functions in the pathway protein modification; lipoprotein biosynthesis (signal peptide cleavage). Functionally, this protein specifically catalyzes the removal of signal peptides from prolipoproteins. The sequence is that of Lipoprotein signal peptidase from Staphylococcus aureus.